Consider the following 299-residue polypeptide: Ribonuclease H2 subunit A (299 aa).

Met1 carries the post-translational modification N-acetylmethionine. One can recognise an RNase H type-2 domain in the interval 28–250; sequence PCVLGVDEAG…AQTILEKEAE (223 aa). Residues Asp34, Glu35, and Asp141 each contribute to the a divalent metal cation site. Thr204 and Thr216 each carry phosphothreonine. Phosphoserine occurs at positions 257 and 277.

It belongs to the RNase HII family. Eukaryotic subfamily. As to quaternary structure, the RNase H2 complex is a heterotrimer composed of the catalytic subunit RNASEH2A and the non-catalytic subunits RNASEH2B and RNASEH2C. Mn(2+) is required as a cofactor. Requires Mg(2+) as cofactor.

The protein resides in the nucleus. The enzyme catalyses Endonucleolytic cleavage to 5'-phosphomonoester.. In terms of biological role, catalytic subunit of RNase HII, an endonuclease that specifically degrades the RNA of RNA:DNA hybrids. Participates in DNA replication, possibly by mediating the removal of lagging-strand Okazaki fragment RNA primers during DNA replication. Mediates the excision of single ribonucleotides from DNA:RNA duplexes. This is Ribonuclease H2 subunit A (RNASEH2A) from Homo sapiens (Human).